A 206-amino-acid chain; its full sequence is Tumor protein D54 (206 aa).

Met1 is subject to N-acetylmethionine. The span at 1–14 shows a compositional bias: polar residues; sequence MDSAGQDINLNSPN. The disordered stretch occupies residues 1 to 24; sequence MDSAGQDINLNSPNKGLLSDSMTD. Phosphoserine occurs at positions 3, 12, 19, and 21. Residues 38–82 adopt a coiled-coil conformation; sequence VEGLTEAEEEELRAELTKVEEEIVTLRQVLAAKERHCGELKRRLG. Phosphoserine occurs at positions 96, 149, and 161. Thr163 is subject to Phosphothreonine. Ser166 bears the Phosphoserine mark. Thr173 carries the post-translational modification Phosphothreonine. Residues 175-185 are compositionally biased toward basic and acidic residues; it reads KSKVVGDRENG. Residues 175–206 are disordered; sequence KSKVVGDRENGSDNLPSSAGSGDKPLSDPAPF. Residues Ser192 and Ser195 each carry the phosphoserine modification.

This sequence belongs to the TPD52 family. In terms of assembly, forms a homodimer or heterodimer with other members of the family. Interacts with MAL2.

This chain is Tumor protein D54 (TPD52L2), found in Homo sapiens (Human).